Consider the following 768-residue polypeptide: MINIEDISKSSNQSEEKQLKSTSSKPKYSFAAKSLFKGSNNITPYYLSTSNTFQCVASESIQTWLLSDDGHIFTSSGNFVLDVSSGGYFVELVQLNSNSKTQIWTIDTTNNKIQNQGNGNYLDIDCFNICVAPLNGNATQQWTTFRRAPIPTGNWGYFQSKQLNSNNYWGLSVLNNSTSYNTSVVMNKVQAKSKGQIWQMTSDGHILSRLDGNLVLDIGPSINGSTTNYYLNTNVYKANDLMQQWGINENNQIFNQYYPNLCIGFVGQLGVDSTVNCVLAQPSSACDTYFQFIANPTYSLNQIVGEVPEPFPAYTSGDLLASYQYLSNDATSNFTDDIRSLYTGINVSLQSFLSIVTNATCPSSIHSTEDFSNVQNQIKTELIYAINVRLVFENYSGFYSKLFSQGSSNLTNLANLINVDMSSNQMVNANYTDAITSIFYSLISEIPVGGPIIANIGQSAVEFGELMSQSNYQGASTYQVELSQLYTHLNTNYENEMANAQSMKDTILQDWGMMSKTYALCFLPTNDPSSLNMNGLDFDEISDVASVAYEIAMIQMLLPTTYQIYFTPAGYWVPYSDGDFAYSDNSGTYIMATIEYSNSYPPKELTDKLWNNGVSKQEFFLSAYGWNLATSLTYYNNTKQHNNIFKLAFPTIKNFTGVPMQFVMTNEGDNLGNFTVKTHFAKFFSTYYSCGEAGHHYFDIAVTDINKNKVANFTVDIKLKALEGSYVSIKTGSLVVQPGYAVGNPICNQGSYSLMFSASILIPIYKSE.

Residues 1–22 are disordered; it reads MINIEDISKSSNQSEEKQLKST. Ricin B-type lectin domains are found at residues 1–107 and 100–248; these read MINI…WTID and KTQI…WGIN.

Belongs to the cup family.

The protein localises to the cytoplasm. It is found in the membrane. May play an important role in stabilizing and/or regulating the cell membrane during Ca(2+) stress or certain stages of development. In Dictyostelium discoideum (Social amoeba), this protein is Calcium up-regulated protein G (cupG).